Here is a 173-residue protein sequence, read N- to C-terminus: 6,7-dimethyl-8-ribityllumazine synthase (173 aa).

Residues Phe-24, 58–60, and 82–84 contribute to the 5-amino-6-(D-ribitylamino)uracil site; these read ALE and AVI. 87-88 is a (2S)-2-hydroxy-3-oxobutyl phosphate binding site; the sequence is ET. His-90 (proton donor) is an active-site residue. Residue Asn-115 coordinates 5-amino-6-(D-ribitylamino)uracil. Arg-129 contacts (2S)-2-hydroxy-3-oxobutyl phosphate. The disordered stretch occupies residues 150–173; the sequence is TLDQLSDDEEDEEDEDDEDEEERA. The span at 154-173 shows a compositional bias: acidic residues; sequence LSDDEEDEEDEDDEDEEERA.

The protein belongs to the DMRL synthase family.

The enzyme catalyses (2S)-2-hydroxy-3-oxobutyl phosphate + 5-amino-6-(D-ribitylamino)uracil = 6,7-dimethyl-8-(1-D-ribityl)lumazine + phosphate + 2 H2O + H(+). It functions in the pathway cofactor biosynthesis; riboflavin biosynthesis; riboflavin from 2-hydroxy-3-oxobutyl phosphate and 5-amino-6-(D-ribitylamino)uracil: step 1/2. Its function is as follows. Catalyzes the formation of 6,7-dimethyl-8-ribityllumazine by condensation of 5-amino-6-(D-ribitylamino)uracil with 3,4-dihydroxy-2-butanone 4-phosphate. This is the penultimate step in the biosynthesis of riboflavin. This chain is 6,7-dimethyl-8-ribityllumazine synthase, found in Burkholderia mallei (strain NCTC 10247).